The chain runs to 568 residues: Urease subunit alpha (568 aa).

One can recognise a Urease domain in the interval 129–568 (GAIDSHIHFI…LPMAQRYFLF (440 aa)). Ni(2+) contacts are provided by H134, H136, and K217. Residue K217 is modified to N6-carboxylysine. Residue H219 coordinates substrate. Positions 246 and 272 each coordinate Ni(2+). H320 serves as the catalytic Proton donor. Residue D360 participates in Ni(2+) binding.

This sequence belongs to the metallo-dependent hydrolases superfamily. Urease alpha subunit family. Heterotrimer of UreA (gamma), UreB (beta) and UreC (alpha) subunits. Three heterotrimers associate to form the active enzyme. Requires Ni cation as cofactor. Carboxylation allows a single lysine to coordinate two nickel ions.

It localises to the cytoplasm. It carries out the reaction urea + 2 H2O + H(+) = hydrogencarbonate + 2 NH4(+). It functions in the pathway nitrogen metabolism; urea degradation; CO(2) and NH(3) from urea (urease route): step 1/1. The chain is Urease subunit alpha from Saccharophagus degradans (strain 2-40 / ATCC 43961 / DSM 17024).